Consider the following 652-residue polypeptide: Acetyl-coenzyme A synthetase (652 aa).

CoA contacts are provided by residues 193-196 (RRGK) and Thr-312. ATP contacts are provided by residues 388–390 (GEP), 412–417 (DTWWQT), Asp-501, and Arg-516. Ser-524 contacts CoA. Positions 538, 540, and 543 each coordinate Mg(2+). Lys-611 carries the N6-acetyllysine modification.

Belongs to the ATP-dependent AMP-binding enzyme family. Mg(2+) serves as cofactor. In terms of processing, acetylated. Deacetylation by the SIR2-homolog deacetylase activates the enzyme.

It catalyses the reaction acetate + ATP + CoA = acetyl-CoA + AMP + diphosphate. Catalyzes the conversion of acetate into acetyl-CoA (AcCoA), an essential intermediate at the junction of anabolic and catabolic pathways. AcsA undergoes a two-step reaction. In the first half reaction, AcsA combines acetate with ATP to form acetyl-adenylate (AcAMP) intermediate. In the second half reaction, it can then transfer the acetyl group from AcAMP to the sulfhydryl group of CoA, forming the product AcCoA. This is Acetyl-coenzyme A synthetase from Streptomyces avermitilis (strain ATCC 31267 / DSM 46492 / JCM 5070 / NBRC 14893 / NCIMB 12804 / NRRL 8165 / MA-4680).